The primary structure comprises 256 residues: Hydroxyacylglutathione hydrolase (256 aa).

Residues His57, His59, Asp61, His62, His115, Asp134, and His172 each contribute to the Zn(2+) site.

Belongs to the metallo-beta-lactamase superfamily. Glyoxalase II family. In terms of assembly, monomer. It depends on Zn(2+) as a cofactor.

The catalysed reaction is an S-(2-hydroxyacyl)glutathione + H2O = a 2-hydroxy carboxylate + glutathione + H(+). Its pathway is secondary metabolite metabolism; methylglyoxal degradation; (R)-lactate from methylglyoxal: step 2/2. Its function is as follows. Thiolesterase that catalyzes the hydrolysis of S-D-lactoyl-glutathione to form glutathione and D-lactic acid. The polypeptide is Hydroxyacylglutathione hydrolase (Rhizobium johnstonii (strain DSM 114642 / LMG 32736 / 3841) (Rhizobium leguminosarum bv. viciae)).